The chain runs to 33 residues: Brevinin-2CDYb (33 aa).

C27 and C33 form a disulfide bridge.

Belongs to the frog skin active peptide (FSAP) family. Brevinin subfamily. In terms of tissue distribution, expressed by the skin glands.

The protein localises to the secreted. Functionally, antimicrobial peptide. The chain is Brevinin-2CDYb from Rana dybowskii (Dybovsky's frog).